The following is a 613-amino-acid chain: Dihydroxy-acid dehydratase (613 aa).

Mg(2+) is bound at residue Asp81. Cys122 contributes to the [2Fe-2S] cluster binding site. Residues Asp123 and Lys124 each contribute to the Mg(2+) site. N6-carboxylysine is present on Lys124. Cys195 lines the [2Fe-2S] cluster pocket. Glu491 is a binding site for Mg(2+). Ser517 functions as the Proton acceptor in the catalytic mechanism.

It belongs to the IlvD/Edd family. In terms of assembly, homodimer. It depends on [2Fe-2S] cluster as a cofactor. Requires Mg(2+) as cofactor.

The enzyme catalyses (2R)-2,3-dihydroxy-3-methylbutanoate = 3-methyl-2-oxobutanoate + H2O. The catalysed reaction is (2R,3R)-2,3-dihydroxy-3-methylpentanoate = (S)-3-methyl-2-oxopentanoate + H2O. It participates in amino-acid biosynthesis; L-isoleucine biosynthesis; L-isoleucine from 2-oxobutanoate: step 3/4. It functions in the pathway amino-acid biosynthesis; L-valine biosynthesis; L-valine from pyruvate: step 3/4. Its function is as follows. Functions in the biosynthesis of branched-chain amino acids. Catalyzes the dehydration of (2R,3R)-2,3-dihydroxy-3-methylpentanoate (2,3-dihydroxy-3-methylvalerate) into 2-oxo-3-methylpentanoate (2-oxo-3-methylvalerate) and of (2R)-2,3-dihydroxy-3-methylbutanoate (2,3-dihydroxyisovalerate) into 2-oxo-3-methylbutanoate (2-oxoisovalerate), the penultimate precursor to L-isoleucine and L-valine, respectively. This Buchnera aphidicola subsp. Schlechtendalia chinensis protein is Dihydroxy-acid dehydratase.